Here is a 487-residue protein sequence, read N- to C-terminus: Probable cobyric acid synthase (487 aa).

Positions 249–435 (DVDIAVVRFP…LHGIFNNASF (187 aa)) constitute a GATase cobBQ-type domain. Cys328 acts as the Nucleophile in catalysis. Residue His427 is part of the active site.

It belongs to the CobB/CobQ family. CobQ subfamily.

The protein operates within cofactor biosynthesis; adenosylcobalamin biosynthesis. Functionally, catalyzes amidations at positions B, D, E, and G on adenosylcobyrinic A,C-diamide. NH(2) groups are provided by glutamine, and one molecule of ATP is hydrogenolyzed for each amidation. This chain is Probable cobyric acid synthase, found in Methanocella arvoryzae (strain DSM 22066 / NBRC 105507 / MRE50).